A 340-amino-acid polypeptide reads, in one-letter code: MRFHGDMLLTTPVISSLKKNYPDAKIDVLLYQDTIPILSENPEINALYGIKNKKAKASEKIANFFHLIKVLRANKYDLIVNLTDQWMVAILVRLLNARVKISQDYHHRQSAFWRKSFTHLVPLQGGNVVESNLSVLTPLGVDSLVKQTTMSYPPASWKRMRRELDHAGVGQNYVVIQPTARQIFKCWDNAKFSAVIDALHARGYEVVLTSGPDKDDLACVNEIAQGCQTPPVTALAGKVTFPELGALIDHAQLFIGVDSAPAHIAAAVNTPLISLFGATDHIFWRPWSNNMIQFWAGDYREMPTRDQRDRNEMYLSVIPAADVIAAVDKLLPSSTTGTSL.

The protein belongs to the glycosyltransferase 9 family.

It carries out the reaction an L-alpha-D-Hep-(1-&gt;3)-4-O-phospho-L-alpha-D-Hep-(1-&gt;5)-[alpha-Kdo-(2-&gt;4)]-alpha-Kdo-(2-&gt;6)-lipid A + ADP-L-glycero-beta-D-manno-heptose = an L-alpha-D-Hep-(1-&gt;7)-L-alpha-D-Hep-(1-&gt;3)-4-O-phospho-L-alpha-D-Hep-(1-&gt;5)-[alpha-Kdo-(2-&gt;4)]-alpha-Kdo-(2-&gt;6)-lipid A + ADP + H(+). The enzyme catalyses L-alpha-D-Hep-(1-&gt;3)-4-O-phospho-L-alpha-D-Hep-(1-&gt;5)-[alpha-Kdo-(2-&gt;4)]-alpha-Kdo-(2-&gt;6)-lipid A (E. coli) + ADP-L-glycero-beta-D-manno-heptose = L-alpha-D-Hep-(1-&gt;7)-L-alpha-D-Hep-(1-&gt;3)-4-O-phospho-L-alpha-D-Hep-(1-&gt;5)-[alpha-Kdo-(2-&gt;4)]-alpha-Kdo-(2-&gt;6)-lipid A (E. coli) + ADP + H(+). It functions in the pathway bacterial outer membrane biogenesis; LPS core biosynthesis. In terms of biological role, glycosyltransferase involved in the biosynthesis of the core oligosaccharide region of lipopolysaccharide (LPS). Catalyzes the addition of the third heptose unit (HepIII) to the second heptose unit (HepII) of the phospho-Hep2-Kdo2-lipid A module. The transfer of HepIII seems to be a prerequisite to the phosphorylation of the second heptose unit. This is Lipopolysaccharide heptosyltransferase 3 from Escherichia coli.